Here is a 53-residue protein sequence, read N- to C-terminus: IgA-inducing protein homolog (53 aa).

A signal peptide spans 1-30 (MCSYYHMKKRSVSGCNITIFAVMFSHLSAG).

It localises to the secreted. Functionally, enhances IgA secretion from B-cells stimulated via CD40. This is IgA-inducing protein homolog (IGIP) from Homo sapiens (Human).